Here is a 63-residue protein sequence, read N- to C-terminus: Large ribosomal subunit protein bL28 (63 aa).

Belongs to the bacterial ribosomal protein bL28 family.

The polypeptide is Large ribosomal subunit protein bL28 (Symbiobacterium thermophilum (strain DSM 24528 / JCM 14929 / IAM 14863 / T)).